We begin with the raw amino-acid sequence, 401 residues long: Argininosuccinate synthase (401 aa).

ATP contacts are provided by residues 11–19 (AYSGGLDTS) and alanine 38. Tyrosine 89 and serine 94 together coordinate L-citrulline. Position 119 (glycine 119) interacts with ATP. Positions 121, 125, and 126 each coordinate L-aspartate. Residue asparagine 125 participates in L-citrulline binding. Arginine 129, serine 177, serine 186, glutamate 262, and tyrosine 274 together coordinate L-citrulline.

Belongs to the argininosuccinate synthase family. Type 1 subfamily. In terms of assembly, homotetramer.

The protein resides in the cytoplasm. The catalysed reaction is L-citrulline + L-aspartate + ATP = 2-(N(omega)-L-arginino)succinate + AMP + diphosphate + H(+). Its pathway is amino-acid biosynthesis; L-arginine biosynthesis; L-arginine from L-ornithine and carbamoyl phosphate: step 2/3. This chain is Argininosuccinate synthase, found in Nitratidesulfovibrio vulgaris (strain DSM 19637 / Miyazaki F) (Desulfovibrio vulgaris).